A 258-amino-acid polypeptide reads, in one-letter code: Ribosomal RNA small subunit methyltransferase A (258 aa).

Positions 12, 14, 38, 59, 83, and 100 each coordinate S-adenosyl-L-methionine.

The protein belongs to the class I-like SAM-binding methyltransferase superfamily. rRNA adenine N(6)-methyltransferase family. RsmA subfamily.

It localises to the cytoplasm. It catalyses the reaction adenosine(1518)/adenosine(1519) in 16S rRNA + 4 S-adenosyl-L-methionine = N(6)-dimethyladenosine(1518)/N(6)-dimethyladenosine(1519) in 16S rRNA + 4 S-adenosyl-L-homocysteine + 4 H(+). Specifically dimethylates two adjacent adenosines (A1518 and A1519) in the loop of a conserved hairpin near the 3'-end of 16S rRNA in the 30S particle. May play a critical role in biogenesis of 30S subunits. The protein is Ribosomal RNA small subunit methyltransferase A of Metamycoplasma arthritidis (strain 158L3-1) (Mycoplasma arthritidis).